A 634-amino-acid polypeptide reads, in one-letter code: Glutathione S-transferase C-terminal domain-containing protein (634 aa).

The 203-residue stretch at 131–333 (LGFKKTCLKA…QEVPKVKTAA (203 aa)) folds into the GST C-terminal domain. A disordered region spans residues 189–233 (RVHNDDKLRRQKLKQQKAAGSEPPSGKGKAKSKASAQKTPKDLAA). Positions 204–226 (QKAAGSEPPSGKGKAKSKASAQK) are enriched in low complexity.

This sequence belongs to the GSTCD family.

It is found in the cytoplasm. In Mus musculus (Mouse), this protein is Glutathione S-transferase C-terminal domain-containing protein (Gstcd).